Reading from the N-terminus, the 545-residue chain is MAEEANKDADISSLSLSLDPEIIGGQNNFLENNLQQIFQKIIQERGPFRDLKEEDLQKELQKESIKDESSAKSSETENVLEFATLDSKRNVNDTEVESMDSQAYKKELIEQIMIAQTECSLALDMTSLLLSKFKENSIETISPFLKSTVPPSSLQFSRSQPPESKESDATLAKCWKEKSLTSSCKFLFEAKERLTSVVETEHEYYTELVKVKEASWPLFNSQGSNHLSVQYSCLGGISLGLGLIRMKPESKSFEVQSSLLYSQAALKISILNKDRDEIGSSTWSWPSQNCNSVLLKDIYKLQEILFEMDIWNSLLQEAQSCGNQGVNFTGDEILVPISDDHVVRITLETSSKNTESGFTEDKKSNEDTSTNFVTIKQEKELLKCLCDTLNAIAHILFLKHCRKSDRRSQQPELYMAIDANAPLILRPLIFYYNLNQESLEFQRWLKQRDISFKFMPNYPWEKAKDFLELENSLSINRLSISWRIMVSNFEPAIFIQHTPTLHGTDKSVWRCKDQYSSNQFSSLKNVCQYIEHHINSLSRRSKKTE.

Positions 148 to 168 (TVPPSSLQFSRSQPPESKESD) are disordered. A compositionally biased stretch (polar residues) spans 149 to 162 (VPPSSLQFSRSQPP).

This sequence belongs to the Mediator complex subunit 17 family. Component of the Mediator complex. Interacts with med18, prk1 and rbp1.

Its subcellular location is the nucleus. In terms of biological role, component of the Mediator complex, a coactivator involved in the regulated transcription of nearly all RNA polymerase II-dependent genes. Mediator functions as a bridge to convey information from gene-specific regulatory proteins to the basal RNA polymerase II transcription machinery. Mediator is recruited to promoters by direct interactions with regulatory proteins and serves as a scaffold for the assembly of a functional preinitiation complex with RNA polymerase II and the general transcription factors. This Schizosaccharomyces pombe (strain 972 / ATCC 24843) (Fission yeast) protein is Mediator of RNA polymerase II transcription subunit 17 (med17).